The chain runs to 356 residues: Phospho-N-acetylmuramoyl-pentapeptide-transferase (356 aa).

10 consecutive transmembrane segments (helical) span residues alanine 27–leucine 47, threonine 73–leucine 93, phenylalanine 97–tyrosine 117, leucine 134–threonine 154, glycine 163–phenylalanine 183, glycine 195–serine 215, alanine 232–phenylalanine 252, alanine 258–valine 278, valine 285–phenylalanine 305, and threonine 333–leucine 353.

Belongs to the glycosyltransferase 4 family. MraY subfamily. Mg(2+) serves as cofactor.

The protein localises to the cell inner membrane. It catalyses the reaction UDP-N-acetyl-alpha-D-muramoyl-L-alanyl-gamma-D-glutamyl-meso-2,6-diaminopimeloyl-D-alanyl-D-alanine + di-trans,octa-cis-undecaprenyl phosphate = di-trans,octa-cis-undecaprenyl diphospho-N-acetyl-alpha-D-muramoyl-L-alanyl-D-glutamyl-meso-2,6-diaminopimeloyl-D-alanyl-D-alanine + UMP. Its pathway is cell wall biogenesis; peptidoglycan biosynthesis. In terms of biological role, catalyzes the initial step of the lipid cycle reactions in the biosynthesis of the cell wall peptidoglycan: transfers peptidoglycan precursor phospho-MurNAc-pentapeptide from UDP-MurNAc-pentapeptide onto the lipid carrier undecaprenyl phosphate, yielding undecaprenyl-pyrophosphoryl-MurNAc-pentapeptide, known as lipid I. The chain is Phospho-N-acetylmuramoyl-pentapeptide-transferase from Sphingopyxis alaskensis (strain DSM 13593 / LMG 18877 / RB2256) (Sphingomonas alaskensis).